The primary structure comprises 136 residues: Ribonuclease P protein component (136 aa).

The protein belongs to the RnpA family. Consists of a catalytic RNA component (M1 or rnpB) and a protein subunit.

The catalysed reaction is Endonucleolytic cleavage of RNA, removing 5'-extranucleotides from tRNA precursor.. RNaseP catalyzes the removal of the 5'-leader sequence from pre-tRNA to produce the mature 5'-terminus. It can also cleave other RNA substrates such as 4.5S RNA. The protein component plays an auxiliary but essential role in vivo by binding to the 5'-leader sequence and broadening the substrate specificity of the ribozyme. This chain is Ribonuclease P protein component, found in Burkholderia mallei (strain NCTC 10247).